Reading from the N-terminus, the 794-residue chain is Phosphoribosylformylglycinamidine synthase subunit PurL (794 aa).

His47 is an active-site residue. ATP contacts are provided by Tyr50 and Lys89. Glu91 lines the Mg(2+) pocket. Substrate is bound by residues 92–95 (SHNH) and Arg114. Residue His93 is the Proton acceptor of the active site. Asp115 serves as a coordination point for Mg(2+). Position 238 (Gln238) interacts with substrate. Asp266 is a Mg(2+) binding site. Residue 310-312 (ESQ) participates in substrate binding. 2 residues coordinate ATP: Asp522 and Gly559. Position 560 (Asn560) interacts with Mg(2+). Residue Ser562 participates in substrate binding.

This sequence belongs to the FGAMS family. As to quaternary structure, monomer. Part of the FGAM synthase complex composed of 1 PurL, 1 PurQ and 2 PurS subunits.

Its subcellular location is the cytoplasm. The enzyme catalyses N(2)-formyl-N(1)-(5-phospho-beta-D-ribosyl)glycinamide + L-glutamine + ATP + H2O = 2-formamido-N(1)-(5-O-phospho-beta-D-ribosyl)acetamidine + L-glutamate + ADP + phosphate + H(+). The protein operates within purine metabolism; IMP biosynthesis via de novo pathway; 5-amino-1-(5-phospho-D-ribosyl)imidazole from N(2)-formyl-N(1)-(5-phospho-D-ribosyl)glycinamide: step 1/2. Functionally, part of the phosphoribosylformylglycinamidine synthase complex involved in the purines biosynthetic pathway. Catalyzes the ATP-dependent conversion of formylglycinamide ribonucleotide (FGAR) and glutamine to yield formylglycinamidine ribonucleotide (FGAM) and glutamate. The FGAM synthase complex is composed of three subunits. PurQ produces an ammonia molecule by converting glutamine to glutamate. PurL transfers the ammonia molecule to FGAR to form FGAM in an ATP-dependent manner. PurS interacts with PurQ and PurL and is thought to assist in the transfer of the ammonia molecule from PurQ to PurL. In Prochlorococcus marinus (strain MIT 9313), this protein is Phosphoribosylformylglycinamidine synthase subunit PurL.